Here is a 178-residue protein sequence, read N- to C-terminus: Large ribosomal subunit protein bL17 (178 aa).

The tract at residues 150–178 is disordered; it reads PADEPVVAEENAPQSAVKDAVDECEGKAD. Residues 168–178 are compositionally biased toward basic and acidic residues; it reads DAVDECEGKAD.

The protein belongs to the bacterial ribosomal protein bL17 family. Part of the 50S ribosomal subunit. Contacts protein L32.

This chain is Large ribosomal subunit protein bL17, found in Geobacter metallireducens (strain ATCC 53774 / DSM 7210 / GS-15).